Consider the following 139-residue polypeptide: Putative pre-16S rRNA nuclease (139 aa).

It belongs to the YqgF nuclease family.

Its subcellular location is the cytoplasm. Could be a nuclease involved in processing of the 5'-end of pre-16S rRNA. This chain is Putative pre-16S rRNA nuclease, found in Streptococcus pyogenes serotype M49 (strain NZ131).